Here is a 144-residue protein sequence, read N- to C-terminus: Large ribosomal subunit protein uL13 (144 aa).

Residues 125 to 144 (YRGPEHPHQAQKPQPLEVKA) are disordered.

It belongs to the universal ribosomal protein uL13 family. As to quaternary structure, part of the 50S ribosomal subunit.

This protein is one of the early assembly proteins of the 50S ribosomal subunit, although it is not seen to bind rRNA by itself. It is important during the early stages of 50S assembly. This chain is Large ribosomal subunit protein uL13, found in Aquifex aeolicus (strain VF5).